A 78-amino-acid polypeptide reads, in one-letter code: Acyl carrier protein (78 aa).

Residues 2–77 form the Carrier domain; it reads SEIAQKVKSI…QAIAYLEQHV (76 aa). Position 37 is an O-(pantetheine 4'-phosphoryl)serine (serine 37).

The protein belongs to the acyl carrier protein (ACP) family. 4'-phosphopantetheine is transferred from CoA to a specific serine of apo-ACP by AcpS. This modification is essential for activity because fatty acids are bound in thioester linkage to the sulfhydryl of the prosthetic group.

Its subcellular location is the cytoplasm. Its pathway is lipid metabolism; fatty acid biosynthesis. Its function is as follows. Carrier of the growing fatty acid chain in fatty acid biosynthesis. The chain is Acyl carrier protein from Cytophaga hutchinsonii (strain ATCC 33406 / DSM 1761 / CIP 103989 / NBRC 15051 / NCIMB 9469 / D465).